The primary structure comprises 426 residues: Glutamate-1-semialdehyde 2,1-aminomutase (426 aa).

Residue Lys-265 is modified to N6-(pyridoxal phosphate)lysine.

The protein belongs to the class-III pyridoxal-phosphate-dependent aminotransferase family. HemL subfamily. Pyridoxal 5'-phosphate is required as a cofactor.

It is found in the cytoplasm. It carries out the reaction (S)-4-amino-5-oxopentanoate = 5-aminolevulinate. It functions in the pathway porphyrin-containing compound metabolism; protoporphyrin-IX biosynthesis; 5-aminolevulinate from L-glutamyl-tRNA(Glu): step 2/2. This chain is Glutamate-1-semialdehyde 2,1-aminomutase, found in Hyperthermus butylicus (strain DSM 5456 / JCM 9403 / PLM1-5).